Consider the following 185-residue polypeptide: Elongation factor P (185 aa).

This sequence belongs to the elongation factor P family.

It is found in the cytoplasm. Its pathway is protein biosynthesis; polypeptide chain elongation. Its function is as follows. Involved in peptide bond synthesis. Stimulates efficient translation and peptide-bond synthesis on native or reconstituted 70S ribosomes in vitro. Probably functions indirectly by altering the affinity of the ribosome for aminoacyl-tRNA, thus increasing their reactivity as acceptors for peptidyl transferase. The sequence is that of Elongation factor P from Streptococcus pyogenes serotype M28 (strain MGAS6180).